A 93-amino-acid chain; its full sequence is Integration host factor subunit beta (93 aa).

It belongs to the bacterial histone-like protein family. As to quaternary structure, heterodimer of an alpha and a beta chain.

This protein is one of the two subunits of integration host factor, a specific DNA-binding protein that functions in genetic recombination as well as in transcriptional and translational control. The polypeptide is Integration host factor subunit beta (Vibrio parahaemolyticus serotype O3:K6 (strain RIMD 2210633)).